Here is a 404-residue protein sequence, read N- to C-terminus: Tryptophan synthase beta chain (404 aa).

Residue lysine 94 is modified to N6-(pyridoxal phosphate)lysine.

It belongs to the TrpB family. Tetramer of two alpha and two beta chains. Pyridoxal 5'-phosphate is required as a cofactor.

It carries out the reaction (1S,2R)-1-C-(indol-3-yl)glycerol 3-phosphate + L-serine = D-glyceraldehyde 3-phosphate + L-tryptophan + H2O. The protein operates within amino-acid biosynthesis; L-tryptophan biosynthesis; L-tryptophan from chorismate: step 5/5. Its function is as follows. The beta subunit is responsible for the synthesis of L-tryptophan from indole and L-serine. This chain is Tryptophan synthase beta chain, found in Staphylococcus aureus (strain JH1).